Here is a 4351-residue protein sequence, read N- to C-terminus: Protocadherin Fat 2 (4351 aa).

The N-terminal stretch at 1-18 is a signal peptide; it reads MTLVLLGLAILLLHRAAC. Residues 19–4050 lie on the Extracellular side of the membrane; the sequence is EKSLEETIPP…IKRGDWGQQE (4032 aa). 2 Cadherin domains span residues 34–148 and 149–256; these read THSL…KPLF and SPPS…PPAI. N-linked (GlcNAc...) asparagine glycosylation is found at Asn-39, Asn-210, Asn-280, and Asn-330. Cadherin domains lie at 363 to 458, 459 to 564, 565 to 669, 716 to 820, 821 to 925, 926 to 1032, 1033 to 1142, 1138 to 1242, 1243 to 1346, 1350 to 1448, 1449 to 1555, 1556 to 1660, 1661 to 1758, 1759 to 1872, 1873 to 1968, 1969 to 2070, 2071 to 2171, 2172 to 2272, 2273 to 2379, 2380 to 2481, 2482 to 2585, 2586 to 2692, 2693 to 2799, 2800 to 2908, 2909 to 3013, 3014 to 3115, 3116 to 3220, 3221 to 3323, 3324 to 3428, 3429 to 3533, and 3534 to 3631; these read EKAV…APVF, NRSS…QPMF, EEVN…VPVQ, DHFP…PPRF, PPGG…PPQC, ITEH…SPHF, SSFV…RPVF, SRPV…PPMF, SHKL…SSIP, DESY…RPQF, LQDH…SPHF, TQLR…APVF, SKDE…PPAF, GKPT…PPRF, SEQI…SLQF, DQDV…IPEF, QHLP…NPLF, QSPY…PPTF, SQLV…PPKF, REPQ…SPEF, QQNV…APQF, KASG…LPKF, SEPL…RPVF, EADP…PPRF, ASED…SPQC, SQLL…APRF, FPSH…LPIF, LNAE…HPRF, THDL…PPRF, FQLN…PPST, and LPLE…VPQQ. 4 N-linked (GlcNAc...) asparagine glycosylation sites follow: Asn-459, Asn-568, Asn-627, and Asn-789. An N-linked (GlcNAc...) asparagine glycan is attached at Asn-996. N-linked (GlcNAc...) asparagine glycans are attached at residues Asn-1175, Asn-1276, and Asn-1417. Asn-1899, Asn-1998, Asn-2007, Asn-2102, Asn-2165, Asn-2183, Asn-2325, Asn-2368, Asn-2387, Asn-2430, Asn-2470, Asn-2547, and Asn-2597 each carry an N-linked (GlcNAc...) asparagine glycan. Residues Asn-3127, Asn-3278, and Asn-3312 are each glycosylated (N-linked (GlcNAc...) asparagine). Residues Asn-3432, Asn-3603, Asn-3770, Asn-3774, Asn-3815, Asn-3842, Asn-3875, and Asn-3906 are each glycosylated (N-linked (GlcNAc...) asparagine). Positions 3775-3946 constitute a Laminin G-like domain; it reads GTTLRFSGQS…RLETWALSQC (172 aa). 4 cysteine pairs are disulfide-bonded: Cys-3914–Cys-3946, Cys-3953–Cys-3964, Cys-3958–Cys-3974, and Cys-3976–Cys-3985. 2 consecutive EGF-like domains span residues 3949 to 3986 and 3988 to 4024; these read PGTA…RNCE and GREN…DRCE. N-linked (GlcNAc...) asparagine glycosylation is present at Asn-3991. Cystine bridges form between Cys-3992–Cys-4003, Cys-3997–Cys-4012, and Cys-4014–Cys-4023. Residues 4051–4071 traverse the membrane as a helical segment; sequence FLVITVALPLVIIATVGLLLY. Residues 4072–4351 are Cytoplasmic-facing; sequence CRRRKSHKPV…DYGSCEEVMF (280 aa). A disordered region spans residues 4316–4340; the sequence is VNGGPATGRSQPRAPPNYEGSDMVE.

As to quaternary structure, homodimer. As to expression, cerebellum-specific expression. Expressed in thin parallel fibers of cerebellar granule cells.

The protein resides in the cell membrane. It localises to the cell junction. It is found in the golgi apparatus. Its subcellular location is the trans-Golgi network. Its function is as follows. Involved in the regulation of cell migration. May be involved in mediating the organization of the parallel fibers of granule cells during cerebellar development. The chain is Protocadherin Fat 2 (Fat2) from Rattus norvegicus (Rat).